The primary structure comprises 727 residues: UvrABC system protein C (727 aa).

A GIY-YIG domain is found at 16–95; that stretch reads VDPGVYKFRD…IKEFDPRFNV (80 aa). Positions 208–243 constitute a UVR domain; the sequence is DRLVRQLEARMQEASEELDFETAARLRDDVGALRRA. Disordered stretches follow at residues 503-527 and 679-727; these read DADQ…QTGR and SADV…TGVE. Residues 701–711 show a composition bias toward basic and acidic residues; the sequence is NGADIPREPVE. Residues 718–727 show a composition bias toward polar residues; it reads QSASQRTGVE.

This sequence belongs to the UvrC family. Interacts with UvrB in an incision complex.

It localises to the cytoplasm. Its function is as follows. The UvrABC repair system catalyzes the recognition and processing of DNA lesions. UvrC both incises the 5' and 3' sides of the lesion. The N-terminal half is responsible for the 3' incision and the C-terminal half is responsible for the 5' incision. The protein is UvrABC system protein C of Rhodococcus jostii (strain RHA1).